Here is a 937-residue protein sequence, read N- to C-terminus: MQQPISIQQPVVNNINNSPNNQANINNNTTNNTNNNNNNNNTTNNIANNNNSNNINNNNEINNSNINNNINNGINNDIDRGGEKKANKLIAKTTKKFNKDMTAYTSGKFFELWRNQVVRDKILGYVRIHNLHYDKRVFKCIDLNNCIDNGADLQQQHNCHRVHNHYHQDLGHNYFGKVSRGIVSLSDYKYYGYLRSVHLIGYEQHEEELIKTIKSLPVGVSTLELSGHLNKIIFKEGSLPTSITNLTISSPTKLGYKSIPSHLKTLKLNSTFNDPLLVQGRLEGQLGIVPLLPIDGAITSLDTGGKFNQPFEAGLLPSSLTELAFGNEYFRPIEVGSLPSGIKSLKLGQRFCLPIPIGSLPIGLTELQLGGTQQNPILTIGCLPPTLTKLTLDNHFNQPLVIGVIPSSLKTMIFGPRYNQPLPPSVFPDSLTHLEFHQNSSYIFPLKLGYNIPSNVSTLLLSFRSQERNVTLGTNSNIKKLRCGGDYLPSLSSDDSTIGAILNSFSSSSSRETFPRSVESLHLNIVNVLDKEINIPSNVTKLIITGNNLQHDGPDVFMVGKKGSKITHLKLRGYEKPICQEMFKNLVNLKSIQFIGAYNHQLGPNCFPPQSITNLEFDCLPSVIPIGSLPSTLKSLRVKSFCTPFLKNSLPSSLLILECAFVRSFIDSYEIVDEIFVEQQAQYAQQQLLQNEQALQAQKQLEIQQQVAQQRLQQLKQQKQQQQQQQDNEQQLDHSIENNDGSIQDDHEHELEEEQENEEEEEDTNNHQHPFLQEAINHNQQLQQKQQEKYLYSSNNSNNYNYNNNSNNNNNNNSNEEDDEEEDLIQPIISKEWLPPSIHTLIIRGEPTIQLPLPESLTNIHIESKNQSILHNIPLMEKISKLVRVFDYESDTNSIFKKSLAICNNINQNQNQNNNNYNNNNNNNNNNNNNKKKNVKK.

The span at 1 to 12 (MQQPISIQQPVV) shows a compositional bias: polar residues. The disordered stretch occupies residues 1–60 (MQQPISIQQPVVNNINNSPNNQANINNNTTNNTNNNNNNNNTTNNIANNNNSNNINNNNE). The segment covering 13–60 (NNINNSPNNQANINNNTTNNTNNNNNNNNTTNNIANNNNSNNINNNNE) has biased composition (low complexity). 4 FNIP repeats span residues 307–350 (FNQP…LGQR), 354–394 (PIPI…TLDN), 396–439 (FNQP…FHQN), and 598–640 (YNHQ…RVKS). The stretch at 677 to 769 (VEQQAQYAQQ…EEEDTNNHQH (93 aa)) forms a coiled coil. Residues 719 to 729 (KQQQQQQQDNE) are compositionally biased toward low complexity. Disordered regions lie at residues 719–767 (KQQQ…TNNH), 794–823 (SNNS…EEED), and 910–937 (QNQN…NVKK). Residues 751 to 763 (LEEEQENEEEEED) are compositionally biased toward acidic residues. Low complexity-rich tracts occupy residues 794-814 (SNNS…NNNS) and 910-929 (QNQN…NNNN). Residues 902–937 (ICNNINQNQNQNNNNYNNNNNNNNNNNNNKKKNVKK) adopt a coiled-coil conformation.

The protein is FNIP repeat-containing protein DDB_G0271996 of Dictyostelium discoideum (Social amoeba).